The primary structure comprises 70 residues: NADH dehydrogenase [ubiquinone] 1 alpha subcomplex subunit 1 (70 aa).

Residues 1–21 (MWFEILPGLSVMGVCLLIPGL) form a helical membrane-spanning segment.

This sequence belongs to the complex I NDUFA1 subunit family. As to quaternary structure, complex I is composed of 45 different subunits. Primarily expressed in heart and skeletal muscle.

It is found in the mitochondrion inner membrane. Functionally, accessory subunit of the mitochondrial membrane respiratory chain NADH dehydrogenase (Complex I), that is believed not to be involved in catalysis. Complex I functions in the transfer of electrons from NADH to the respiratory chain. The immediate electron acceptor for the enzyme is believed to be ubiquinone. This is NADH dehydrogenase [ubiquinone] 1 alpha subcomplex subunit 1 (NDUFA1) from Homo sapiens (Human).